We begin with the raw amino-acid sequence, 156 residues long: Putative HTH-type transcriptional regulator YffB (156 aa).

In terms of domain architecture, HTH rrf2-type spans Lys2 to Asp137.

The protein is Putative HTH-type transcriptional regulator YffB (yffB) of Lactococcus lactis subsp. lactis (strain IL1403) (Streptococcus lactis).